Here is a 518-residue protein sequence, read N- to C-terminus: DNA-(apurinic or apyrimidinic site) endonuclease 2 (518 aa).

Mg(2+)-binding residues include Asn-8 and Glu-48. Residue Tyr-156 is part of the active site. Residues Asp-197, Asn-199, Asp-303, and His-304 each contribute to the Mg(2+) site. Asp-197 serves as the catalytic Proton donor/acceptor. His-304 acts as the Proton acceptor in catalysis. Residues 355–405 (STLQHNNQTRVQTCQNKAQVRSTRPQPSQVGSSRGQKNLKSYFQPSPSCPQ) show a composition bias toward polar residues. The segment at 355–407 (STLQHNNQTRVQTCQNKAQVRSTRPQPSQVGSSRGQKNLKSYFQPSPSCPQAS) is disordered. A Glycyl lysine isopeptide (Lys-Gly) (interchain with G-Cter in ubiquitin) cross-link involves residue Lys-371. Positions 390–397 (QKNLKSYF) are required for the interaction and colocalization with PCNA in nuclear foci in presence of oxidative-induced DNA damaging agents. Zn(2+) is bound by residues Cys-469, His-472, Cys-495, and Cys-509. The GRF-type zinc-finger motif lies at 469–518 (CGGHREPCVMRTVKKPGPNLGRRFYMCARPRGPPTDPSSRCNFFLWSRPS).

This sequence belongs to the DNA repair enzymes AP/ExoA family. As to quaternary structure, interacts with PCNA; this interaction is triggered by reactive oxygen species and increased by misincorporation of uracil in nuclear DNA. Mg(2+) serves as cofactor. Mn(2+) is required as a cofactor. In terms of processing, ubiquitinated by the CUL9-RBX1 complex. Ubiquitinated by MKRN3 at Lys-371 leading to proteasomal degradation. In terms of tissue distribution, highly expressed in brain and kidney. Weakly expressed in the fetal brain.

The protein resides in the nucleus. Its subcellular location is the cytoplasm. It is found in the mitochondrion. It carries out the reaction Exonucleolytic cleavage in the 3'- to 5'-direction to yield nucleoside 5'-phosphates.. With respect to regulation, 3'-5' exonuclease activity is activated by sodium and manganese. 3'-5' exonuclease and 3'-phosphodiesterase activities are stimulated in presence of PCNA. Functions as a weak apurinic/apyrimidinic (AP) endodeoxyribonuclease in the DNA base excision repair (BER) pathway of DNA lesions induced by oxidative and alkylating agents. Initiates repair of AP sites in DNA by catalyzing hydrolytic incision of the phosphodiester backbone immediately adjacent to the damage, generating a single-strand break with 5'-deoxyribose phosphate and 3'-hydroxyl ends. Also displays double-stranded DNA 3'-5' exonuclease, 3'-phosphodiesterase activities. Shows robust 3'-5' exonuclease activity on 3'-recessed heteroduplex DNA and is able to remove mismatched nucleotides preferentially. Also exhibits 3'-5' exonuclease activity on a single nucleotide gap containing heteroduplex DNA and on blunt-ended substrates. Shows fairly strong 3'-phosphodiesterase activity involved in the removal of 3'-damaged termini formed in DNA by oxidative agents. In the nucleus functions in the PCNA-dependent BER pathway. Plays a role in reversing blocked 3' DNA ends, problematic lesions that preclude DNA synthesis. Required for somatic hypermutation (SHM) and DNA cleavage step of class switch recombination (CSR) of immunoglobulin genes. Required for proper cell cycle progression during proliferation of peripheral lymphocytes. This Homo sapiens (Human) protein is DNA-(apurinic or apyrimidinic site) endonuclease 2 (APEX2).